The primary structure comprises 732 residues: Zinc-exporting P-type ATPase (732 aa).

An HMA domain is found at 29-96 (GRMRVRADWV…AIGGAKHVAA (68 aa)). 6 consecutive transmembrane segments (helical) span residues 105-123 (HSTE…GGAA), 146-164 (MVAT…RGAL), 172-186 (AGTD…IASL), 195-209 (LTVL…YLQD), 342-366 (VGEN…LVTG), and 372-390 (MTML…TPTA). The active-site 4-aspartylphosphate intermediate is aspartate 423. Mg(2+) is bound by residues aspartate 423, threonine 425, and aspartate 625. A run of 2 helical transmembrane segments spans residues 676–695 (AVDV…AAGL) and 705–724 (PVLA…ANSS).

The protein belongs to the cation transport ATPase (P-type) (TC 3.A.3) family. Type IB subfamily.

It localises to the cell membrane. The enzyme catalyses Zn(2+)(in) + ATP + H2O = Zn(2+)(out) + ADP + phosphate + H(+). Functionally, zn(2+) efflux transporter which is involved in detoxification of zinc during infection. The polypeptide is Zinc-exporting P-type ATPase (Mycobacterium marinum (strain ATCC BAA-535 / M)).